Reading from the N-terminus, the 404-residue chain is Pre-heme d1 synthase (404 aa).

The region spanning 22–235 is the Radical SAM core domain; it reads GTPKPVVIWN…LIARALESAE (214 aa). [4Fe-4S] cluster-binding residues include cysteine 36, cysteine 40, cysteine 43, cysteine 340, cysteine 343, cysteine 349, and cysteine 371.

This sequence belongs to the radical SAM superfamily. The cofactor is [4Fe-4S] cluster.

It participates in porphyrin-containing compound metabolism. In terms of biological role, involved in heme d1 biosynthesis. Radical SAM enzyme that catalyzes the removal of two propionate side chains from the intermediate 12,18-didecarboxysiroheme (DDSH) and may introduce the keto functions on rings A and B, yielding the heme d1 precursor dihydro-heme d1. In Dinoroseobacter shibae (strain DSM 16493 / NCIMB 14021 / DFL 12), this protein is Pre-heme d1 synthase.